The primary structure comprises 212 residues: Ribosomal RNA large subunit methyltransferase E (212 aa).

S-adenosyl-L-methionine-binding residues include G57, W59, D77, D93, and D122. The Proton acceptor role is filled by K162.

The protein belongs to the class I-like SAM-binding methyltransferase superfamily. RNA methyltransferase RlmE family.

Its subcellular location is the cytoplasm. The catalysed reaction is uridine(2552) in 23S rRNA + S-adenosyl-L-methionine = 2'-O-methyluridine(2552) in 23S rRNA + S-adenosyl-L-homocysteine + H(+). Functionally, specifically methylates the uridine in position 2552 of 23S rRNA at the 2'-O position of the ribose in the fully assembled 50S ribosomal subunit. The protein is Ribosomal RNA large subunit methyltransferase E of Coxiella burnetii (strain CbuK_Q154) (Coxiella burnetii (strain Q154)).